A 304-amino-acid polypeptide reads, in one-letter code: Oxygen-dependent coproporphyrinogen-III oxidase (304 aa).

Ser-94 is a substrate binding site. His-98 and His-108 together coordinate a divalent metal cation. The Proton donor role is filled by His-108. 110-112 (NVR) provides a ligand contact to substrate. His-147 and His-177 together coordinate a divalent metal cation. The interval 242-277 (YVEFNLVYDRGTLFGLQTGGRTESILMSMPPLVRWE) is important for dimerization. 260–262 (GGR) contacts substrate.

This sequence belongs to the aerobic coproporphyrinogen-III oxidase family. In terms of assembly, homodimer. Requires a divalent metal cation as cofactor.

It is found in the cytoplasm. The catalysed reaction is coproporphyrinogen III + O2 + 2 H(+) = protoporphyrinogen IX + 2 CO2 + 2 H2O. The protein operates within porphyrin-containing compound metabolism; protoporphyrin-IX biosynthesis; protoporphyrinogen-IX from coproporphyrinogen-III (O2 route): step 1/1. In terms of biological role, involved in the heme biosynthesis. Catalyzes the aerobic oxidative decarboxylation of propionate groups of rings A and B of coproporphyrinogen-III to yield the vinyl groups in protoporphyrinogen-IX. This is Oxygen-dependent coproporphyrinogen-III oxidase from Shewanella halifaxensis (strain HAW-EB4).